The sequence spans 164 residues: Glutamate uptake regulatory protein (164 aa).

The HTH asnC-type domain occupies 5–66 (LDDFDIKILD…LLDPQKIGLG (62 aa)). The H-T-H motif DNA-binding region spans 24 to 43 (MAELSEKTGLSANACWRRIR).

Represses the secondary, H(+)-coupled glutamate uptake system (Gluemp) genes. The sequence is that of Glutamate uptake regulatory protein (grp) from Zymomonas mobilis subsp. mobilis (strain ATCC 10988 / DSM 424 / LMG 404 / NCIMB 8938 / NRRL B-806 / ZM1).